We begin with the raw amino-acid sequence, 360 residues long: MRIKEHLKQLKPYQPGKPIEAVKSEYGLDKVVKLASNENPYGCSEAAKEALHHEIQQLALYPDGYSAALRTRLSKHLNVSETSLIFGNGSDEIIQIICRAFLNDKTNTVTAAPTFPQYKHNAVIEGAEVREIALRPDGSHDLDAMLEAIDEQTQVVWICSPNNPTGTYTSEGELLAFLERVPSRVLVVLDEAYYEYVTAEDYPETVPLLSKYSNLMILRTFSKAYGLAALRVGYGIADENLIRQIEPAREPFNTSRLGQAAAIAALDDQAFIASCVEQNNAGLQQYYDFAKTHGLKCYPSQTNFVLIDFKRPADELFQALLEKGYIVRSGNALGFPTSLRITIGTKEQNEEILAILAEIL.

N6-(pyridoxal phosphate)lysine is present on K223.

Belongs to the class-II pyridoxal-phosphate-dependent aminotransferase family. Histidinol-phosphate aminotransferase subfamily. In terms of assembly, homodimer. The cofactor is pyridoxal 5'-phosphate.

It catalyses the reaction L-histidinol phosphate + 2-oxoglutarate = 3-(imidazol-4-yl)-2-oxopropyl phosphate + L-glutamate. It participates in amino-acid biosynthesis; L-histidine biosynthesis; L-histidine from 5-phospho-alpha-D-ribose 1-diphosphate: step 7/9. This chain is Histidinol-phosphate aminotransferase (hisC), found in Bacillus subtilis (strain 168).